A 329-amino-acid chain; its full sequence is Biotin synthase (329 aa).

Positions Phe-48–Arg-278 constitute a Radical SAM core domain. Positions 66, 70, and 73 each coordinate [4Fe-4S] cluster. Residues Ser-143 and Cys-203 each coordinate [2Fe-2S] cluster.

Belongs to the radical SAM superfamily. Biotin synthase family. In terms of assembly, homodimer. Requires [4Fe-4S] cluster as cofactor. It depends on [2Fe-2S] cluster as a cofactor.

The enzyme catalyses (4R,5S)-dethiobiotin + (sulfur carrier)-SH + 2 reduced [2Fe-2S]-[ferredoxin] + 2 S-adenosyl-L-methionine = (sulfur carrier)-H + biotin + 2 5'-deoxyadenosine + 2 L-methionine + 2 oxidized [2Fe-2S]-[ferredoxin]. It participates in cofactor biosynthesis; biotin biosynthesis; biotin from 7,8-diaminononanoate: step 2/2. In terms of biological role, catalyzes the conversion of dethiobiotin (DTB) to biotin by the insertion of a sulfur atom into dethiobiotin via a radical-based mechanism. The chain is Biotin synthase from Geobacter sulfurreducens (strain ATCC 51573 / DSM 12127 / PCA).